The primary structure comprises 924 residues: Probable dipeptidyl-aminopeptidase B (924 aa).

The segment covering 1–12 has biased composition (polar residues); that stretch reads MPSTYSDDNTLR. The interval 1–102 is disordered; it reads MPSTYSDDNT…RSNQRSSADG (102 aa). Topologically, residues 1-111 are cytoplasmic; sequence MPSTYSDDNT…GQRMDRSLRR (111 aa). The span at 14–23 shows a compositional bias: basic and acidic residues; it reads GLDRFRDHSP. The span at 31-43 shows a compositional bias: polar residues; it reads SQETDSTVSTTSI. Over residues 47–58 the composition is skewed to basic and acidic residues; the sequence is RIQERLDTKEFP. Low complexity predominate over residues 87–100; sequence NASPSSRSNQRSSA. The helical; Signal-anchor for type II membrane protein transmembrane segment at 112–132 threads the bilayer; it reads WLFIVSGALVATWVIGLIFFV. Residues 133–924 lie on the Vacuolar side of the membrane; it reads SSKAYKPSSS…GMKRRALPTA (792 aa). 2 N-linked (GlcNAc...) asparagine glycosylation sites follow: Asn231 and Asn364. Ser768 (charge relay system) is an active-site residue. The N-linked (GlcNAc...) asparagine glycan is linked to Asn827. Active-site charge relay system residues include Asp845 and His878.

The protein belongs to the peptidase S9B family.

The protein resides in the vacuole membrane. The catalysed reaction is Release of an N-terminal dipeptide, Xaa-Yaa-|-Zaa-, from a polypeptide, preferentially when Yaa is Pro, provided Zaa is neither Pro nor hydroxyproline.. Functionally, type IV dipeptidyl-peptidase which removes N-terminal dipeptides sequentially from polypeptides having unsubstituted N-termini provided that the penultimate residue is proline. This chain is Probable dipeptidyl-aminopeptidase B (dapB), found in Neurospora crassa (strain ATCC 24698 / 74-OR23-1A / CBS 708.71 / DSM 1257 / FGSC 987).